The following is a 465-amino-acid chain: Cruciferin CRU4 (465 aa).

The signal sequence occupies residues 1–22 (MGPTSLLSFFFTFLTLFHGFTA). 2 disulfide bridges follow: Cys-29–Cys-62 and Cys-105–Cys-283. Cupin type-1 domains are found at residues 34-236 (LNAL…ETAQ) and 289-438 (ENLD…QEAR). The residue at position 108 (Thr-108) is a Phosphothreonine. A disordered region spans residues 112–135 (SPVFGQGQGQEQGQGQGQGQGQGF). The span at 117–133 (QGQGQEQGQGQGQGQGQ) shows a compositional bias: gly residues. Position 306 is a phosphotyrosine (Tyr-306). Phosphoserine is present on residues Ser-308 and Ser-443.

This sequence belongs to the 11S seed storage protein (globulins) family. Heterohexamer; each subunit is composed of an acidic and a basic chain derived from a single precursor and linked by a disulfide bond.

The protein localises to the rough endoplasmic reticulum. Its function is as follows. This is a seed storage protein. This chain is Cruciferin CRU4 (CRU4), found in Brassica napus (Rape).